Here is a 117-residue protein sequence, read N- to C-terminus: Serine rich endogenous peptide 5 (117 aa).

An N-terminal signal peptide occupies residues Met1–Ala31. The SCOOP motif motif lies at Leu41–Tyr55. Residues Gln42–Arg51 are compositionally biased toward basic residues. Residues Gln42–Thr117 form a disordered region. A SxS motif essential for MIK2 binding motif is present at residues Ser47–Ser49. The segment covering Leu60–Gln84 has biased composition (pro residues).

As to quaternary structure, interacts with MIK2 (via extracellular leucine-rich repeat domain); this interaction triggers the formation of complex between MIK2 and the BAK1/SERK3 and SERK4 coreceptors, and subsequent BAK1 activation by phosphorylation.

The protein localises to the cell membrane. It localises to the secreted. The protein resides in the extracellular space. Its subcellular location is the apoplast. Functionally, brassicaceae-specific phytocytokine (plant endogenous peptide released into the apoplast) perceived by MIK2 in a BAK1/SERK3 and SERK4 coreceptors-dependent manner, that modulates various physiological and antimicrobial processes including growth prevention and reactive oxygen species (ROS) response regulation. In Arabidopsis thaliana (Mouse-ear cress), this protein is Serine rich endogenous peptide 5.